A 343-amino-acid chain; its full sequence is Ornithine carbamoyltransferase (343 aa).

Residues 62–65, Gln-89, Arg-113, and 140–143 each bind carbamoyl phosphate; these read STRT and HPTQ. Residues Asn-172, Asp-236, and 240-241 each bind L-ornithine; that span reads SM. Carbamoyl phosphate is bound by residues 278–279 and Arg-323; that span reads CL.

It belongs to the aspartate/ornithine carbamoyltransferase superfamily. OTCase family.

The protein localises to the cytoplasm. It carries out the reaction carbamoyl phosphate + L-ornithine = L-citrulline + phosphate + H(+). Its pathway is amino-acid degradation; L-arginine degradation via ADI pathway; carbamoyl phosphate from L-arginine: step 2/2. In terms of biological role, reversibly catalyzes the transfer of the carbamoyl group from carbamoyl phosphate (CP) to the N(epsilon) atom of ornithine (ORN) to produce L-citrulline. This Levilactobacillus brevis (strain ATCC 367 / BCRC 12310 / CIP 105137 / JCM 1170 / LMG 11437 / NCIMB 947 / NCTC 947) (Lactobacillus brevis) protein is Ornithine carbamoyltransferase.